The primary structure comprises 1610 residues: Adenylate cyclase type 10 (1610 aa).

Guanylate cyclase domains lie at 42–179 (VLMF…RLAQ) and 293–418 (TIVF…ARMM). Residues aspartate 47 and isoleucine 48 each contribute to the Mg(2+) site. 47–52 (DISGFT) contacts ATP. Lysine 95 lines the hydrogencarbonate pocket. Aspartate 99 contacts Mg(2+). Residues aspartate 99 and lysine 144 each contribute to the ATP site. Residues valine 167, arginine 176, and methionine 337 each coordinate hydrogencarbonate. ATP is bound by residues valine 406 and 412 to 416 (NIAAR).

Belongs to the adenylyl cyclase class-4/guanylyl cyclase family. Mg(2+) serves as cofactor. The cofactor is Mn(2+).

It is found in the cell membrane. The protein localises to the cytoplasm. The protein resides in the cytoskeleton. It localises to the perinuclear region. Its subcellular location is the nucleus. It is found in the cell projection. The protein localises to the cilium. The enzyme catalyses ATP = 3',5'-cyclic AMP + diphosphate. With respect to regulation, activated by manganese or magnesium ions. In the presence of magnesium ions, the enzyme is activated by bicarbonate. Calcium mildly increases the enzyme activity, also in the presence of magnesium ions. Catalyzes the formation of the signaling molecule cAMP. May function as sensor that mediates responses to changes in cellular bicarbonate and CO(2) levels. Has a critical role in mammalian spermatogenesis by producing the cAMP which regulates cAMP-responsive nuclear factors indispensable for sperm maturation in the epididymis. Induces capacitation, the maturational process that sperm undergo prior to fertilization. Involved in ciliary beat regulation. This chain is Adenylate cyclase type 10 (ADCY10), found in Oryctolagus cuniculus (Rabbit).